The primary structure comprises 69 residues: ATP synthase F(0) complex subunit e, mitochondrial (69 aa).

N6-acetyllysine is present on Lys-34. Ser-66 is subject to Phosphoserine.

Belongs to the ATPase e subunit family. As to quaternary structure, component of the ATP synthase complex composed at least of ATP5F1A/subunit alpha, ATP5F1B/subunit beta, ATP5MC1/subunit c (homooctomer), MT-ATP6/subunit a, MT-ATP8/subunit 8, ATP5ME/subunit e, ATP5MF/subunit f, ATP5MG/subunit g, ATP5MK/subunit k, ATP5MJ/subunit j, ATP5F1C/subunit gamma, ATP5F1D/subunit delta, ATP5F1E/subunit epsilon, ATP5PF/subunit F6, ATP5PB/subunit b, ATP5PD/subunit d, ATP5PO/subunit OSCP. ATP synthase complex consists of a soluble F(1) head domain (subunits alpha(3) and beta(3)) - the catalytic core - and a membrane F(0) domain - the membrane proton channel (subunits c, a, 8, e, f, g, k and j). These two domains are linked by a central stalk (subunits gamma, delta, and epsilon) rotating inside the F1 region and a stationary peripheral stalk (subunits F6, b, d, and OSCP).

The protein localises to the mitochondrion. Its subcellular location is the mitochondrion inner membrane. In terms of biological role, subunit e, of the mitochondrial membrane ATP synthase complex (F(1)F(0) ATP synthase or Complex V) that produces ATP from ADP in the presence of a proton gradient across the membrane which is generated by electron transport complexes of the respiratory chain. ATP synthase complex consist of a soluble F(1) head domain - the catalytic core - and a membrane F(1) domain - the membrane proton channel. These two domains are linked by a central stalk rotating inside the F(1) region and a stationary peripheral stalk. During catalysis, ATP synthesis in the catalytic domain of F(1) is coupled via a rotary mechanism of the central stalk subunits to proton translocation. In vivo, can only synthesize ATP although its ATP hydrolase activity can be activated artificially in vitro. Part of the complex F(0) domain. This Homo sapiens (Human) protein is ATP synthase F(0) complex subunit e, mitochondrial.